Reading from the N-terminus, the 500-residue chain is Neuronal pentraxin receptor (500 aa).

The Cytoplasmic portion of the chain corresponds to 1 to 2; it reads MK. The helical; Signal-anchor for type II membrane protein transmembrane segment at 3–23 threads the bilayer; it reads FLAVLLAAGMLAFLGAVICII. Residues 24 to 500 lie on the Extracellular side of the membrane; it reads ASVPLAASPA…FDVCKGRAKA (477 aa). N-linked (GlcNAc...) asparagine glycosylation occurs at Asn-42. Residues 42 to 63 are compositionally biased toward low complexity; it reads NASVASGAAASPGPQRSLSALH. Disordered stretches follow at residues 42 to 81 and 162 to 183; these read NASV…PAAS and ESGL…ADGP. A glycan (N-linked (GlcNAc...) asparagine) is linked at Asn-216. Residues 292-494 enclose the Pentraxin (PTX) domain; it reads DAFKISIPIR…GATKAAFDVC (203 aa). Cys-322 and Cys-383 form a disulfide bridge. 5 residues coordinate Ca(2+): Asn-347, Glu-425, Gln-426, Asp-427, and Gln-437. The N-linked (GlcNAc...) asparagine glycan is linked to Asn-463.

As to quaternary structure, heteropentamer with NPTX1 and/or NPTX2. Also binds taipoxin-associated calcium-binding protein 49 (TCBP49/RCN2). Interacts with KLHL2. The cofactor is Ca(2+). In terms of processing, ubiquitinated by a cullin-RING-based BCR (BTB-CUL3-RBX1) E3 ubiquitin-protein ligase complex containing KLHL2.

The protein localises to the membrane. May be involved in mediating uptake of synaptic material during synapse remodeling or in mediating the synaptic clustering of AMPA glutamate receptors at a subset of excitatory synapses. This is Neuronal pentraxin receptor (NPTXR) from Homo sapiens (Human).